Reading from the N-terminus, the 689-residue chain is Protein SDA1 homolog (689 aa).

Disordered regions lie at residues 227–260, 485–512, and 623–689; these read DEKKDSDSESEDEGPTARDLMVRYSTGKKNTKNK, EQEKKEEPEEDDGWESASLSDDDEDGEW, and TDRK…RLMK. Residues 258–319 adopt a coiled-coil conformation; it reads KNKKKLDKAM…RFEVKLMHMD (62 aa). A compositionally biased stretch (acidic residues) spans 492 to 512; sequence PEEDDGWESASLSDDDEDGEW. Positions 670 to 681 are enriched in basic and acidic residues; the sequence is RDKQIALRDSLL.

Belongs to the SDA1 family.

Its subcellular location is the nucleus. The protein localises to the nucleolus. Its function is as follows. Required for 60S pre-ribosomal subunits export to the cytoplasm. The sequence is that of Protein SDA1 homolog (sdad1) from Xenopus laevis (African clawed frog).